Reading from the N-terminus, the 334-residue chain is Broad-range acid phosphatase DET1 (334 aa).

The active-site Tele-phosphohistidine intermediate is the H32. Residues N38, 44–45, and R108 each bind substrate; that span reads NG. Catalysis depends on E126, which acts as the Proton donor/acceptor. Substrate is bound by residues 168–171 and 195–205; these read LNNT and RVKDEPRIREQ. At S248 the chain carries Phosphoserine.

It belongs to the phosphoglycerate mutase family.

It is found in the cytoplasm. Its subcellular location is the nucleus. In terms of biological role, metal-independent, broad-range acid phosphatase. Involved, either directly or indirectly, in the bidirectional transport of sterols between the endoplasmic reticulum and the plasma membrane. The sequence is that of Broad-range acid phosphatase DET1 (DET1) from Saccharomyces cerevisiae (strain ATCC 204508 / S288c) (Baker's yeast).